Here is a 601-residue protein sequence, read N- to C-terminus: Potassium voltage-gated channel subfamily A member 5 (601 aa).

The interval 1–200 (MEIALVPLEN…FYQLGDEAME (200 aa)) is tetramerization domain. Residues 1-236 (MEIALVPLEN…LIFEYPESSG (236 aa)) lie on the Cytoplasmic side of the membrane. A disordered region spans residues 19–93 (GGEAGTGCSQ…DEEGEGDPAL (75 aa)). Residues 65-74 (RPLPPLPQDP) are compositionally biased toward pro residues. Lys210 is covalently cross-linked (Glycyl lysine isopeptide (Lys-Gly) (interchain with G-Cter in SUMO)). A helical transmembrane segment spans residues 237-258 (SARGIAIVSVLVILISIITFCL). Topologically, residues 259 to 312 (ETLPEFRDERELLRHPPVPHQPLGPSRGANGSGPLAPPSGPTVAPLLPRTLADP) are extracellular. Residues 275-297 (PVPHQPLGPSRGANGSGPLAPPS) are disordered. A glycan (N-linked (GlcNAc...) asparagine) is linked at Asn288. The chain crosses the membrane as a helical span at residues 313–334 (FFIVETTCVIWFTFELLVRFFA). The S-palmitoyl cysteine moiety is linked to residue Cys335. Residues 335–345 (CPSKAEFSRNI) are Cytoplasmic-facing. The chain crosses the membrane as a helical span at residues 346-366 (MNIIDVVAIFPYFITLGTELA). Over 367–383 (EQPGGGGGGQNGQQAMS) the chain is Extracellular. The helical; Voltage-sensor transmembrane segment at 384–404 (LAILRVIRLVRVFRIFKLSRH) threads the bilayer. At 405–419 (SKGLQILGKTLQASM) the chain is on the cytoplasmic side. The interval 406–419 (KGLQILGKTLQASM) is S4-S5 linker. A helical transmembrane segment spans residues 420-441 (RELGLLIFFLFIGVILFSSAVY). Over 442-455 (FAEADNQETHFSSI) the chain is Extracellular. Positions 456–467 (PDAFWWAVVTMT) form an intramembrane region, helical. The Selectivity filter signature appears at 468–473 (TVGYGD). The stretch at 468–475 (TVGYGDMR) is an intramembrane region. The Extracellular segment spans residues 476-482 (PVTVGGK). A helical transmembrane segment spans residues 483 to 511 (IVGSLCAIAGVLTIALPVPVIVSNFNYFY). Over 512-601 (HRETDHEEQA…CLDTSRETDL (90 aa)) the chain is Cytoplasmic. Positions 521–545 (AALKEEQGSQSHGTGLDSGGPRKAS) are disordered. Residue Lys524 forms a Glycyl lysine isopeptide (Lys-Gly) (interchain with G-Cter in SUMO) linkage. The short motif at 599 to 601 (TDL) is the PDZ-binding element.

The protein belongs to the potassium channel family. A (Shaker) (TC 1.A.1.2) subfamily. Kv1.5/KCNA5 sub-subfamily. As to quaternary structure, homotetramer and heterotetramer of potassium channel proteins. Interacts with DLG1, which enhances channel currents. Forms a ternary complex with DLG1 and CAV3. Interacts with KCNAB1. Interacts with UBE2I. Interacts with XIRP2; the interaction is required for normal action potential configuration in the heart. Glycosylated. In terms of processing, sumoylated on Lys-210, and Lys-524, preferentially with SUMO3. Sumoylation regulates the voltage sensitivity of the channel.

Its subcellular location is the cell membrane. It catalyses the reaction K(+)(in) = K(+)(out). Voltage-gated potassium channel that mediates transmembrane potassium transport in excitable membranes. Forms tetrameric potassium-selective channels through which potassium ions pass in accordance with their electrochemical gradient. The channel alternates between opened and closed conformations in response to the voltage difference across the membrane. Can form functional homotetrameric channels and heterotetrameric channels that contain variable proportions of KCNA1, KCNA2, KCNA4, KCNA5, and possibly other family members as well; channel properties depend on the type of alpha subunits that are part of the channel. Channel properties are modulated by cytoplasmic beta subunits that regulate the subcellular location of the alpha subunits and promote rapid inactivation. Homotetrameric channels display rapid activation and slow inactivation. Required for normal electrical conduction including formation of the infranodal ventricular conduction system and normal action potential configuration, as a result of its interaction with XIRP2. May play a role in regulating the secretion of insulin in normal pancreatic islets. In Mustela putorius furo (European domestic ferret), this protein is Potassium voltage-gated channel subfamily A member 5 (KCNA5).